We begin with the raw amino-acid sequence, 1357 residues long: DNA-directed RNA polymerase subunit beta (1357 aa).

This sequence belongs to the RNA polymerase beta chain family. In terms of assembly, the RNAP catalytic core consists of 2 alpha, 1 beta, 1 beta' and 1 omega subunit. When a sigma factor is associated with the core the holoenzyme is formed, which can initiate transcription.

The catalysed reaction is RNA(n) + a ribonucleoside 5'-triphosphate = RNA(n+1) + diphosphate. Functionally, DNA-dependent RNA polymerase catalyzes the transcription of DNA into RNA using the four ribonucleoside triphosphates as substrates. The chain is DNA-directed RNA polymerase subunit beta from Pseudomonas fluorescens (strain ATCC BAA-477 / NRRL B-23932 / Pf-5).